A 400-amino-acid chain; its full sequence is Lysophospholipid transporter LplT (400 aa).

The next 12 membrane-spanning stretches (helical) occupy residues 19–39, 53–73, 91–111, 139–159, 164–184, 195–213, 227–247, 257–277, 281–301, 304–324, 352–372, and 373–393; these read VIVA…ATLA, VLQM…GQIA, AGAA…LVGI, LMEA…GVLA, IAAL…NLFI, SWRL…VVLW, LFWG…PVAL, YLNA…AKLV, TVSR…IFSL, ALLP…FFVV, NSAM…GVPA, and VAIG…LWIW.

Belongs to the major facilitator superfamily. LplT (TC 2.A.1.42) family.

Its subcellular location is the cell inner membrane. Functionally, catalyzes the facilitated diffusion of 2-acyl-glycero-3-phosphoethanolamine (2-acyl-GPE) into the cell. The chain is Lysophospholipid transporter LplT from Salmonella typhi.